The following is a 723-amino-acid chain: Nucleolar protein 11 (723 aa).

The residue at position 346 (lysine 346) is an N6-methyllysine. The segment at 549-572 (FGPEDGNCSEDSQQLNDKPADTAH) is disordered.

In terms of assembly, interacts with UTP4. Interacts with FBL/fibrillarin in a transcription-dependent manner. May associate with the proposed t-UTP subcomplex of the SSU processome containing at least UTP4, WDR43, HEATR1, UTP15, WDR75.

Its subcellular location is the nucleus. The protein localises to the nucleolus. Ribosome biogenesis factor. May be required for both optimal rDNA transcription and small subunit (SSU) pre-rRNA processing at sites A', A0, 1 and 2b. This Mus musculus (Mouse) protein is Nucleolar protein 11 (Nol11).